The following is a 419-amino-acid chain: MHVLILGGGVVGVTSAYYLARAGHQVTVLERQPGAGLETSFANAGQVSPGYSAPWAAPGIPVKALRWLMMRHRPLVLWPRLEPRLYAWLTRMLANCTEEAYRRNKGRMVRLAEYSRDALRDLRTETGIAYDHREKGTLQLFRTRKQLDHVGDDTRVLDAYGVPYTVLDPAGCIAAEPALAAVRDVFVGGLRLPGDETGDAHLFTQRLAALCESLGVTFRYGTAIARLHHAGDRVTAVETADGALLRADAYVAALGSYTPALLRPLGIALPVYPVKGYSLTLPITDAEAAPVSTVMDETYKVAITRLGDRIRVGGTAELAGFSNALRGPRRETLARSVQDLFPAGGDLDKASFWTGLRPMTPDGTPIVGGTRVGNLFTNTGHGTLGWTMACGSGRLLADLVSGRAPEIASDDLALGRYAA.

An FAD-binding site is contributed by 3-17; it reads VLILGGGVVGVTSAY.

It belongs to the DadA oxidoreductase family. Requires FAD as cofactor.

The enzyme catalyses a D-alpha-amino acid + A + H2O = a 2-oxocarboxylate + AH2 + NH4(+). Its pathway is amino-acid degradation; D-alanine degradation; NH(3) and pyruvate from D-alanine: step 1/1. Its function is as follows. Oxidative deamination of D-amino acids. This chain is D-amino acid dehydrogenase, found in Methylobacterium radiotolerans (strain ATCC 27329 / DSM 1819 / JCM 2831 / NBRC 15690 / NCIMB 10815 / 0-1).